We begin with the raw amino-acid sequence, 564 residues long: Formate--tetrahydrofolate ligase (564 aa).

ATP is bound at residue 69-76 (TPAGEGKS).

Belongs to the formate--tetrahydrofolate ligase family.

It carries out the reaction (6S)-5,6,7,8-tetrahydrofolate + formate + ATP = (6R)-10-formyltetrahydrofolate + ADP + phosphate. Its pathway is one-carbon metabolism; tetrahydrofolate interconversion. The protein is Formate--tetrahydrofolate ligase of Renibacterium salmoninarum (strain ATCC 33209 / DSM 20767 / JCM 11484 / NBRC 15589 / NCIMB 2235).